A 251-amino-acid polypeptide reads, in one-letter code: Triosephosphate isomerase (251 aa).

8–10 contacts substrate; sequence NWK. Histidine 97 (electrophile) is an active-site residue. The Proton acceptor role is filled by glutamate 170. Residues glycine 176, serine 215, and 236–237 contribute to the substrate site; that span reads GG.

Belongs to the triosephosphate isomerase family. As to quaternary structure, homodimer.

The protein resides in the cytoplasm. The enzyme catalyses D-glyceraldehyde 3-phosphate = dihydroxyacetone phosphate. It participates in carbohydrate biosynthesis; gluconeogenesis. It functions in the pathway carbohydrate degradation; glycolysis; D-glyceraldehyde 3-phosphate from glycerone phosphate: step 1/1. Functionally, involved in the gluconeogenesis. Catalyzes stereospecifically the conversion of dihydroxyacetone phosphate (DHAP) to D-glyceraldehyde-3-phosphate (G3P). The protein is Triosephosphate isomerase of Nitratidesulfovibrio vulgaris (strain ATCC 29579 / DSM 644 / CCUG 34227 / NCIMB 8303 / VKM B-1760 / Hildenborough) (Desulfovibrio vulgaris).